We begin with the raw amino-acid sequence, 497 residues long: tRNA (adenine(58)-N(1))-methyltransferase non-catalytic subunit TRM6 (497 aa).

The disordered stretch occupies residues 69-102; sequence TNGGSLQPKKKKEEPTSETKEAGTDNRNIIDDGK. The span at 79–102 shows a compositional bias: basic and acidic residues; that stretch reads KKEEPTSETKEAGTDNRNIIDDGK. Residues 94 to 104 are substrate; sequence NRNIIDDGKSQ. At Thr-107 the chain carries Phosphothreonine. 2 substrate regions span residues 145–154 and 175–182; these read KYIKKKKKKY and REPGKINH. Positions 276–354 are disordered; the sequence is SSEPKDIASV…EKQRRQEEQK (79 aa). Ser-298 and Ser-305 each carry phosphoserine. The span at 311-354 shows a compositional bias: basic and acidic residues; it reads ESNHPEEQERMEIVSQDPDYKEPKESGSKKDYIQEKQRRQEEQK. Substrate is bound by residues Arg-349 and Arg-377. 2 substrate regions span residues 415–423 and 434–441; these read RERGGVINL and QVLPDRSH. The segment at 468–497 is disordered; that stretch reads PSLKSSTSTLESHKTEEPAAKKRKCPESDS. The span at 478–497 shows a compositional bias: basic and acidic residues; sequence ESHKTEEPAAKKRKCPESDS.

Belongs to the TRM6/GCD10 family. As to quaternary structure, heterotetramer; composed of two copies of TRMT6 and two copies of TRMT61A.

It is found in the nucleus. Functionally, substrate-binding subunit of tRNA (adenine-N(1)-)-methyltransferase, which catalyzes the formation of N(1)-methyladenine at position 58 (m1A58) in initiator methionyl-tRNA. Together with the TRMT61A catalytic subunit, part of a mRNA N(1)-methyltransferase complex that mediates methylation of adenosine residues at the N(1) position of a small subset of mRNAs: N(1) methylation takes place in tRNA T-loop-like structures of mRNAs and is only present at low stoichiometries. This Bos taurus (Bovine) protein is tRNA (adenine(58)-N(1))-methyltransferase non-catalytic subunit TRM6 (TRMT6).